The sequence spans 470 residues: Methylenetetrahydrofolate--tRNA-(uracil-5-)-methyltransferase TrmFO (470 aa).

10-15 is a binding site for FAD; that stretch reads GAGLAG.

The protein belongs to the MnmG family. TrmFO subfamily. It depends on FAD as a cofactor.

The protein resides in the cytoplasm. The catalysed reaction is uridine(54) in tRNA + (6R)-5,10-methylene-5,6,7,8-tetrahydrofolate + NADH + H(+) = 5-methyluridine(54) in tRNA + (6S)-5,6,7,8-tetrahydrofolate + NAD(+). It catalyses the reaction uridine(54) in tRNA + (6R)-5,10-methylene-5,6,7,8-tetrahydrofolate + NADPH + H(+) = 5-methyluridine(54) in tRNA + (6S)-5,6,7,8-tetrahydrofolate + NADP(+). Its function is as follows. Catalyzes the folate-dependent formation of 5-methyl-uridine at position 54 (M-5-U54) in all tRNAs. The polypeptide is Methylenetetrahydrofolate--tRNA-(uracil-5-)-methyltransferase TrmFO (Prochlorococcus marinus (strain MIT 9312)).